We begin with the raw amino-acid sequence, 367 residues long: Phosphoribosylformylglycinamidine cyclo-ligase (367 aa).

The protein belongs to the AIR synthase family.

It localises to the cytoplasm. It carries out the reaction 2-formamido-N(1)-(5-O-phospho-beta-D-ribosyl)acetamidine + ATP = 5-amino-1-(5-phospho-beta-D-ribosyl)imidazole + ADP + phosphate + H(+). Its pathway is purine metabolism; IMP biosynthesis via de novo pathway; 5-amino-1-(5-phospho-D-ribosyl)imidazole from N(2)-formyl-N(1)-(5-phospho-D-ribosyl)glycinamide: step 2/2. The chain is Phosphoribosylformylglycinamidine cyclo-ligase from Cyanothece sp. (strain PCC 7425 / ATCC 29141).